A 38-amino-acid polypeptide reads, in one-letter code: Large ribosomal subunit protein bL36 (38 aa).

Belongs to the bacterial ribosomal protein bL36 family.

This is Large ribosomal subunit protein bL36 from Polynucleobacter necessarius subsp. necessarius (strain STIR1).